We begin with the raw amino-acid sequence, 371 residues long: dTDP-4-amino-4,6-dideoxy-D-glucose transaminase (371 aa).

Lys186 is modified (N6-(pyridoxal phosphate)lysine).

Belongs to the DegT/DnrJ/EryC1 family. It depends on pyridoxal 5'-phosphate as a cofactor.

It carries out the reaction dTDP-4-amino-4,6-dideoxy-D-glucose + 2-oxoglutarate = dTDP-4-dehydro-6-deoxy-alpha-D-glucose + L-glutamate. It participates in bacterial outer membrane biogenesis; lipopolysaccharide biosynthesis. Functionally, catalyzes the conversion of dTDP-4-dehydro-6-deoxy-D-glucose (dTDP-D-Glc4O) to dTDP-4-amino-4,6-dideoxy-D-glucose (dTDP-D-Qui4N). The polypeptide is dTDP-4-amino-4,6-dideoxy-D-glucose transaminase (vioA) (Escherichia coli).